The primary structure comprises 249 residues: Triosephosphate isomerase (249 aa).

Residues Asn-12 and Lys-14 each coordinate substrate. Lys-14 carries the N6-acetyllysine modification. The residue at position 68 (Tyr-68) is a 3'-nitrotyrosine. The residue at position 80 (Ser-80) is a Phosphoserine. The active-site Electrophile is His-96. Ser-106 is modified (phosphoserine). Residue Lys-142 forms a Glycyl lysine isopeptide (Lys-Gly) (interchain with G-Cter in SUMO1) linkage. Lys-149 carries the N6-succinyllysine modification. Lys-156 bears the N6-acetyllysine; alternate mark. Residue Lys-156 is modified to N6-succinyllysine; alternate. Position 159 is a phosphoserine (Ser-159). Catalysis depends on Glu-166, which acts as the Proton acceptor. Thr-173 carries the phosphothreonine modification. Lys-194 bears the N6-acetyllysine; alternate mark. Lys-194 carries the post-translational modification N6-succinyllysine; alternate. An N6-methyllysine; alternate modification is found at Lys-194. Ser-198 bears the Phosphoserine mark. Position 209 is a 3'-nitrotyrosine (Tyr-209). Ser-212 carries the post-translational modification Phosphoserine. Thr-214 is subject to Phosphothreonine. Position 223 is a phosphoserine (Ser-223). An N6-acetyllysine modification is found at Lys-238.

Belongs to the triosephosphate isomerase family. As to quaternary structure, homodimer.

It localises to the cytoplasm. The catalysed reaction is dihydroxyacetone phosphate = methylglyoxal + phosphate. It carries out the reaction D-glyceraldehyde 3-phosphate = dihydroxyacetone phosphate. Its pathway is carbohydrate degradation; glycolysis; D-glyceraldehyde 3-phosphate from glycerone phosphate: step 1/1. It participates in carbohydrate biosynthesis; gluconeogenesis. Triosephosphate isomerase is an extremely efficient metabolic enzyme that catalyzes the interconversion between dihydroxyacetone phosphate (DHAP) and D-glyceraldehyde-3-phosphate (G3P) in glycolysis and gluconeogenesis. Functionally, it is also responsible for the non-negligible production of methylglyoxal a reactive cytotoxic side-product that modifies and can alter proteins, DNA and lipids. The protein is Triosephosphate isomerase (TPI1) of Gorilla gorilla gorilla (Western lowland gorilla).